The following is a 386-amino-acid chain: NADH-ubiquinone oxidoreductase 49 kDa subunit homolog (386 aa).

This sequence belongs to the complex I 49 kDa subunit family.

The protein localises to the mitochondrion. It catalyses the reaction a ubiquinone + NADH + 5 H(+)(in) = a ubiquinol + NAD(+) + 4 H(+)(out). Core subunit of the mitochondrial membrane respiratory chain NADH dehydrogenase (Complex I) that is believed to belong to the minimal assembly required for catalysis. Complex I functions in the transfer of electrons from NADH to the respiratory chain. The immediate electron acceptor for the enzyme is believed to be ubiquinone. Component of the iron-sulfur (IP) fragment of the enzyme. Component of the iron-sulfur (IP) fragment of the enzyme. The chain is NADH-ubiquinone oxidoreductase 49 kDa subunit homolog (NAD7) from Trypanosoma brucei brucei.